The following is a 546-amino-acid chain: NAD(P)H-quinone oxidoreductase chain 4 (546 aa).

14 helical membrane passes run 17–37 (VPWL…VPFI), 48–68 (WYAL…YLNG), 103–123 (LILL…PVSF), 127–147 (LFYF…AVQD), 149–169 (LLFF…LAIW), 181–201 (FILY…AMGF), 222–242 (GFQL…LPIV), 256–276 (TAPV…YALL), 290–310 (FAPL…LTSF), 327–347 (MGFV…GAML), 348–368 (QMIS…ATYD), 389–409 (FALW…SGFV), 430–450 (VVIC…LLSM), and 477–497 (VYII…PRLM).

The protein belongs to the complex I subunit 4 family.

The protein localises to the cellular thylakoid membrane. It catalyses the reaction a plastoquinone + NADH + (n+1) H(+)(in) = a plastoquinol + NAD(+) + n H(+)(out). The enzyme catalyses a plastoquinone + NADPH + (n+1) H(+)(in) = a plastoquinol + NADP(+) + n H(+)(out). In terms of biological role, NDH-1 shuttles electrons from NAD(P)H, via FMN and iron-sulfur (Fe-S) centers, to quinones in the respiratory chain. The immediate electron acceptor for the enzyme in this species is believed to be plastoquinone. Couples the redox reaction to proton translocation (for every two electrons transferred, four hydrogen ions are translocated across the cytoplasmic membrane), and thus conserves the redox energy in a proton gradient. This chain is NAD(P)H-quinone oxidoreductase chain 4, found in Parasynechococcus marenigrum (strain WH8102).